We begin with the raw amino-acid sequence, 233 residues long: Ras-related protein RABA6a (233 aa).

20–27 provides a ligand contact to GTP; sequence GDSAVGKS. The Effector region signature appears at 42–50; the sequence is SKPTIGVEF. GTP contacts are provided by residues 68–72, 126–129, and 156–157; these read DTAGQ, NKSD, and SA. S-geranylgeranyl cysteine attachment occurs at residues Cys230 and Cys231.

It belongs to the small GTPase superfamily. Rab family.

Its subcellular location is the cell membrane. Functionally, intracellular vesicle trafficking and protein transport. The polypeptide is Ras-related protein RABA6a (RABA6A) (Arabidopsis thaliana (Mouse-ear cress)).